We begin with the raw amino-acid sequence, 1366 residues long: MAPSRRKGGGKAAAVAAACRKRKVGDLVLAKVKGFPAWPAVVSEPEKWDASPDSKKVFVHFFGTQQIAFCNPGDVEAFTEERKQSLLTRRHAKGSDFVRAVKEIIESYEKLKQQERASDPKSAEEGTLGSAENTTLMPQVIEIPTATSLTQMNSDPSHGRDESTLLNEDASAAEQMLALRDNSGPRNKACDSAVVKEPRKIATYSSRKRNGGVRSQNCAPQNETCPVQRSKSPSRLQTEKLQSSMLQNSDGGQTIDDVEDGALRREKRIRRSSGHSESDDVATSSLNSHGSDEENASEIATVESDNNRNEGNGVDSGSKVEQIDIGGKFLEGDYDLNKGLNFQINIMVKRKKRKPTRKRGTSDVVDPQAKVEGEAVPEAGARNNVQTSQNSHEKFTERPCEENGDEHLPLVKRARVRMSRAFYGNHEANSSLQAEERSPKDTVVSATAQTSPSDIISSHDTFAVEESKFFEVSAKLSGDMVNVAPSPVEKSHDGMSPSEACVQTVREREYAMGWNELSKTPDDKSAGPQYNQVSSLPAGEAQTASVPEAVCPEVLKLLTSESDLPAVQYCQVAKIEPSMDPNTVDSSANNASEICSLSIPSQLSGQDRSNDQDACVSLENSREYLNEEGSKIDACVAQVVQSEAIEHSPSSCLVVNKQETENMPKTVNMLLKEGHGSLGEECAIVEPAQCTPNLPISATESDVIVGENVPLNEIGCTKCEDAVEDSRQLKMIGETNDQKQQVQTNNSVLVSENLSREKMSFSPAITADTPARGTPHSSSVYYHISTSESANDMQNNSSGSPNIPTGEKKNDCDAIVKEEEKIETGVCQGQKVVSCDVQSTRESYEDALCSLVRTKESIGRATCLAMDLMKFGVSAKAMEILAHTLESESNLKRRVDLFFLVDSIAQCSKGLKGDTGCVYLSAIQVILPRLLAAAVPAGATTQENRKQCLKVLKLWLERRILPESIVRHHIRELDSHSIVPACLYSRRSARTERSLDDPVRDMEDMLVDEYGSNSTLQLPGFCMPALLKDEEGGSDSEGGCDSEGGSDSDGGDFESVTPEHESRILEENVSSSTAERHTLILEDVDGELEMEDVAPPWGTENCTHTDQADNTKVSNCQLGQQHRPVFGTSHQHMSLSSPPLPSSSPPPPPAPPSQQGECAMPDSYLNGFENGGYRNVHGDQQAGPLRMNPPLSGSTMHYQGPESSYISGVQLTNSIPQADGSNFQHRPYPSHPHPHPPPPPPPPQHQFSFREPGHVLKSHRDAPSYSHRSHYVPNCDERNFHDNHERMRHAPFENRDNWRYPPSSSYGSRYQDEHKAPYPSSSYNGVRWDNPPRQYNNRPSFHPKPHSEGPAPVGMRDPGMWHQRSD.

The region spanning 24–81 (VGDLVLAKVKGFPAWPAVVSEPEKWDASPDSKKVFVHFFGTQQIAFCNPGDVEAFTEE) is the PWWP domain. Residues 111–124 (LKQQERASDPKSAE) show a composition bias toward basic and acidic residues. Disordered regions lie at residues 111-138 (LKQQ…TLMP), 203-319 (TYSS…SGSK), 384-403 (NVQT…CEEN), 427-451 (EANS…AQTS), and 787-808 (SESA…TGEK). A compositionally biased stretch (polar residues) spans 213–252 (VRSQNCAPQNETCPVQRSKSPSRLQTEKLQSSMLQNSDGG). The span at 391–403 (SHEKFTERPCEEN) shows a compositional bias: basic and acidic residues. The segment covering 787–803 (SESANDMQNNSSGSPNI) has biased composition (polar residues). A CID domain is found at 836 to 977 (DVQSTRESYE…HHIRELDSHS (142 aa)). 2 disordered regions span residues 1027–1076 (LKDE…TAER) and 1128–1366 (TSHQ…QRSD). Residues 1032 to 1052 (GGSDSEGGCDSEGGSDSDGGD) are compositionally biased toward acidic residues. Positions 1057 to 1066 (TPEHESRILE) are enriched in basic and acidic residues. The span at 1138 to 1152 (PPLPSSSPPPPPAPP) shows a compositional bias: pro residues. A compositionally biased stretch (polar residues) spans 1191–1223 (LSGSTMHYQGPESSYISGVQLTNSIPQADGSNF). Residues 1229–1244 (PSHPHPHPPPPPPPPQ) show a composition bias toward pro residues. Basic and acidic residues-rich tracts occupy residues 1251–1262 (EPGHVLKSHRDA) and 1275–1298 (CDER…RDNW). Low complexity predominate over residues 1299–1309 (RYPPSSSYGSR).

In terms of tissue distribution, expressed throughout young primordia, and vegetative and reproductive apices.

The protein resides in the nucleus. Its function is as follows. Probable transcription factor that acts with partial redundancy with HULK1 and HULK3. Plays diverse and essential roles in the control of plant development, physiology and flowering time. This Arabidopsis thaliana (Mouse-ear cress) protein is Protein HUA2-LIKE 2.